A 926-amino-acid polypeptide reads, in one-letter code: Alpha-aminoadipic semialdehyde synthase, mitochondrial (926 aa).

The N-terminal 27 residues, 1 to 27, are a transit peptide targeting the mitochondrion; it reads MLQVHRTGLGRLGVSLSKGLHHKAVLA. The tract at residues 28–476 is lysine-ketoglutarate reductase; it reads VRREDVNAWE…ESRERAQSLS (449 aa). N6-acetyllysine occurs at positions 48 and 56. K93 bears the N6-acetyllysine; alternate mark. K93 bears the N6-succinyllysine; alternate mark. The residue at position 128 (K128) is an N6-acetyllysine. N6-acetyllysine; alternate is present on K138. K138 is subject to N6-succinyllysine; alternate. K274 is modified (N6-succinyllysine). Residue K286 is modified to N6-acetyllysine; alternate. Position 286 is an N6-succinyllysine; alternate (K286). K333 is modified (N6-succinyllysine). An N6-acetyllysine; alternate modification is found at K458. K458 is modified (N6-succinyllysine; alternate). A saccharopine dehydrogenase region spans residues 477-926; the sequence is MGTRRKVLVL…IYTTQSTIKP (450 aa). S488, D512, and Q516 together coordinate NAD(+). K523 bears the N6-acetyllysine; alternate mark. K523 carries the N6-succinyllysine; alternate modification. I533 contributes to the NAD(+) binding site. At K535 the chain carries N6-acetyllysine; alternate. K535 is subject to N6-succinyllysine; alternate. Residues L554, A576, and S577 each contribute to the NAD(+) site. L-saccharopine is bound at residue 577 to 578; that stretch reads SY. K584 is subject to N6-acetyllysine; alternate. K584 carries the N6-succinyllysine; alternate modification. 3 residues coordinate NAD(+): L603, D604, and P605. D604 is an L-saccharopine binding site. R703 is a binding site for L-saccharopine. The residue at position 707 (K707) is an N6-acetyllysine. L-saccharopine is bound at residue 724-726; that stretch reads TLR. K732 is subject to N6-succinyllysine. N6-acetyllysine is present on K739. K761 carries the N6-acetyllysine; alternate modification. K761 is modified (N6-succinyllysine; alternate). Residue K780 is modified to N6-acetyllysine.

In the N-terminal section; belongs to the AlaDH/PNT family. The protein in the C-terminal section; belongs to the saccharopine dehydrogenase family. In terms of assembly, homotetramer. In terms of tissue distribution, expressed in all 16 tissues examined with highest expression in the liver.

The protein resides in the mitochondrion. It catalyses the reaction L-saccharopine + NADP(+) + H2O = L-lysine + 2-oxoglutarate + NADPH + H(+). The catalysed reaction is L-saccharopine + NAD(+) + H2O = (S)-2-amino-6-oxohexanoate + L-glutamate + NADH + H(+). Its pathway is amino-acid degradation; L-lysine degradation via saccharopine pathway; glutaryl-CoA from L-lysine: step 1/6. The protein operates within amino-acid degradation; L-lysine degradation via saccharopine pathway; glutaryl-CoA from L-lysine: step 2/6. In terms of biological role, bifunctional enzyme that catalyzes the first two steps in lysine degradation. The polypeptide is Alpha-aminoadipic semialdehyde synthase, mitochondrial (Homo sapiens (Human)).